Reading from the N-terminus, the 1058-residue chain is Ubiquitin-like modifier-activating enzyme 1 Y (1058 aa).

A disordered region spans residues 1–22; that stretch reads MSSSVLSKKRKVSGPDSSLDSS. ATP contacts are provided by residues alanine 477, aspartate 503, arginine 514, lysine 527, and 575–576; that span reads DN. Cysteine 631 acts as the Glycyl thioester intermediate in catalysis.

This sequence belongs to the ubiquitin-activating E1 family. In terms of assembly, monomer. In terms of tissue distribution, expressed in testis in A spermatogonia and spermatids but not (or at very low levels) in pachytene spermatocytes. Also expressed in Y-bearing ovaries and at very low levels in adrenal gland.

It catalyses the reaction ATP + ubiquitin + [E1 ubiquitin-activating enzyme]-L-cysteine = AMP + diphosphate + S-ubiquitinyl-[E1 ubiquitin-activating enzyme]-L-cysteine.. It functions in the pathway protein modification; protein ubiquitination. Its function is as follows. Activates ubiquitin by first adenylating its C-terminal glycine residue with ATP, and thereafter linking this residue to the side chain of a cysteine residue in E1, yielding a ubiquitin-E1 thioester and free AMP. The Y chromosome form could be involved in the survival and proliferation of differentiating spermatogonia. This is Ubiquitin-like modifier-activating enzyme 1 Y (Uba1y) from Mus musculus (Mouse).